We begin with the raw amino-acid sequence, 76 residues long: DNA-directed RNA polymerase subunit omega (76 aa).

The protein belongs to the RNA polymerase subunit omega family. In cyanobacteria the RNAP catalytic core is composed of 2 alpha, 1 beta, 1 beta', 1 gamma and 1 omega subunit. When a sigma factor is associated with the core the holoenzyme is formed, which can initiate transcription.

It carries out the reaction RNA(n) + a ribonucleoside 5'-triphosphate = RNA(n+1) + diphosphate. Its function is as follows. Promotes RNA polymerase assembly. Latches the N- and C-terminal regions of the beta' subunit thereby facilitating its interaction with the beta and alpha subunits. This chain is DNA-directed RNA polymerase subunit omega (rpoZ), found in Synechocystis sp. (strain ATCC 27184 / PCC 6803 / Kazusa).